Here is a 98-residue protein sequence, read N- to C-terminus: NADH-ubiquinone oxidoreductase chain 4L (98 aa).

Transmembrane regions (helical) follow at residues 1–21 (MPLI…GMLV), 29–49 (SLLC…LMTL), and 58–78 (IMPI…LALL).

The protein belongs to the complex I subunit 4L family. Core subunit of respiratory chain NADH dehydrogenase (Complex I) which is composed of 45 different subunits.

It localises to the mitochondrion inner membrane. It carries out the reaction a ubiquinone + NADH + 5 H(+)(in) = a ubiquinol + NAD(+) + 4 H(+)(out). In terms of biological role, core subunit of the mitochondrial membrane respiratory chain NADH dehydrogenase (Complex I) which catalyzes electron transfer from NADH through the respiratory chain, using ubiquinone as an electron acceptor. Part of the enzyme membrane arm which is embedded in the lipid bilayer and involved in proton translocation. This Pongo abelii (Sumatran orangutan) protein is NADH-ubiquinone oxidoreductase chain 4L (MT-ND4L).